The primary structure comprises 68 residues: uncharacterized protein (68 aa).

This is an uncharacterized protein from Saccharomyces cerevisiae (strain ATCC 204508 / S288c) (Baker's yeast).